The primary structure comprises 183 residues: Oligoribonuclease (183 aa).

The Exonuclease domain occupies 8 to 171 (LIWIDLEMTG…DDIRDSIHEL (164 aa)). The active site involves Tyr-129.

Belongs to the oligoribonuclease family.

The protein resides in the cytoplasm. In terms of biological role, 3'-to-5' exoribonuclease specific for small oligoribonucleotides. In Halorhodospira halophila (strain DSM 244 / SL1) (Ectothiorhodospira halophila (strain DSM 244 / SL1)), this protein is Oligoribonuclease.